Here is a 330-residue protein sequence, read N- to C-terminus: MISSATKTLQTNNKTIYVAILSTLTFFLFLDYIPGLQAWSAWVTPPVALFLGLIFALTCGQAHPKFNKKTSKYLLQYSVVGLGFGMNLQSALASGKEGMEFTVISVVGTLLIGWFIGRKIFKIDRNTSYLISSGTAICGGSAIAAIGPVLRAKDSEMSVALGTIFILNAIALFIFPAIGHALDMTEHQFGTWAAIAIHDTSSVVGAGAAYGEEALKVATTIKLTRALWIIPMAFATSFIFKSKGQKISIPWFIFFFILAMIANTYLLNGVPQLGAAINGIARKTLTITMFFIGASLSLDVLRSVGVKPLIQGVLLWVVISLSTLAYIYFV.

The next 10 membrane-spanning stretches (helical) occupy residues 16–33, 38–60, 73–95, 99–116, 128–150, 160–182, 189–211, 221–240, 247–269, and 284–306; these read IYVA…LDYI, AWSA…LTCG, YLLQ…LASG, MEFT…GWFI, SYLI…GPVL, ALGT…GHAL, FGTW…AAYG, IKLT…SFIF, ISIP…LLNG, and TLTI…SVGV.

It belongs to the UPF0324 family.

The protein localises to the cell membrane. This Bacteroides thetaiotaomicron (strain ATCC 29148 / DSM 2079 / JCM 5827 / CCUG 10774 / NCTC 10582 / VPI-5482 / E50) protein is UPF0324 membrane protein BT_4609.